Here is a 192-residue protein sequence, read N- to C-terminus: 21.7 kDa class VI heat shock protein (192 aa).

One can recognise a sHSP domain in the interval 80–192; the sequence is SLRSLGQCRV…IPKINSKNKF (113 aa).

This sequence belongs to the small heat shock protein (HSP20) family. In terms of assembly, may form oligomeric structures.

It is found in the cytoplasm. The sequence is that of 21.7 kDa class VI heat shock protein (HSP21.7) from Arabidopsis thaliana (Mouse-ear cress).